We begin with the raw amino-acid sequence, 883 residues long: MTTTQLNSPQMSDTSLSSAEEKQGSLSAIKLQLEAQLHAQLQAQLQAQLQEWLGPKGVTFSGETFIVPETHDMVKTLFDPTLHKSNFELIILACLFANLVVFAIPLNQVRTLVFIGLYVFWRLSYNFGIGYLLQQQSLHNRLVDWAKEGKLFDEKNKLFWAQFVQHEVKSQRGKDYAINSLPIEFNTWLVFRKFVDLILMSDFITFCCVVYTCAVENASDFTNHWLVWSRVLTGIGLILFNLWVKVNAHNTIKDYAWYWGDFFFRQINNEELIFDGVFEMVPHPMYSVGYVGYYGFALIAKSYTVLAIAIFGHFLQMIFLHYIENPHIDKIYGPSKNEINLIKILKLKDLKSFDNMPPLVGLYNFNWMRSSDLLNLLLVATYAVILPLFSQSTTQYFALTVTTKLIESFGISTLLVLQSYSKYFTKWCLSNDIPVEKSLNNWAVMYNTLINLTYSSLFGLNLMYFLRGSADLLYHDLLYLRIFIGTLLIFTQTWINASIIDLIGYFGWFYGDFFIPKSQSFANHLTKAGVYRYLNNPEQIFGVCGVMGVFIIWPTFENLTCCVLWVLSNFIRINFIEKWHMIRLYGEQEVNQDSGVTKTFKKHLIPEVIQRKISGDEPLRRRPSSPSLADSLDTFIKELTNSKTKLSQQKLVELSQNLSFANSNYKLTIEGLKYNDLKTAKFATLGSPLKVIWQSPLATHSSKDWIGLYRIINTTYSRNRTILSSAGRWTYCPDANGSYVFARNKLFWEEGVYEFRYHLDGKHDVAYISEPFELKHESVSVPLHDDEVEVFALALKEKIFDRLLDIESTTVPIAQVATSQTDNVLATYQLLSSVISTSTKVQISSKIFLKSDQITILDVARKLYDINKVLDELSYDLSIKKDE.

Residues 1–85 lie on the Lumenal side of the membrane; it reads MTTTQLNSPQ…TLFDPTLHKS (85 aa). A helical membrane pass occupies residues 86–106; the sequence is NFELIILACLFANLVVFAIPL. At 107–111 the chain is on the cytoplasmic side; sequence NQVRT. The chain crosses the membrane as a helical span at residues 112–132; that stretch reads LVFIGLYVFWRLSYNFGIGYL. Residues 133-193 lie on the Lumenal side of the membrane; the sequence is LQQQSLHNRL…EFNTWLVFRK (61 aa). The chain crosses the membrane as a helical span at residues 194-214; it reads FVDLILMSDFITFCCVVYTCA. The Cytoplasmic segment spans residues 215–223; it reads VENASDFTN. The chain crosses the membrane as a helical span at residues 224–244; that stretch reads HWLVWSRVLTGIGLILFNLWV. The Lumenal portion of the chain corresponds to 245–279; it reads KVNAHNTIKDYAWYWGDFFFRQINNEELIFDGVFE. The chain crosses the membrane as a helical span at residues 280–300; that stretch reads MVPHPMYSVGYVGYYGFALIA. The Cytoplasmic segment spans residues 301 to 302; it reads KS. A helical transmembrane segment spans residues 303-323; it reads YTVLAIAIFGHFLQMIFLHYI. Over 324-372 the chain is Lumenal; the sequence is ENPHIDKIYGPSKNEINLIKILKLKDLKSFDNMPPLVGLYNFNWMRSSD. A helical membrane pass occupies residues 373 to 393; that stretch reads LLNLLLVATYAVILPLFSQST. Over 394 to 396 the chain is Cytoplasmic; it reads TQY. The helical transmembrane segment at 397–417 threads the bilayer; sequence FALTVTTKLIESFGISTLLVL. Over 418–441 the chain is Lumenal; sequence QSYSKYFTKWCLSNDIPVEKSLNN. Residues 442–462 form a helical membrane-spanning segment; sequence WAVMYNTLINLTYSSLFGLNL. Residues 463 to 469 lie on the Cytoplasmic side of the membrane; it reads MYFLRGS. Residues 470 to 490 form a helical membrane-spanning segment; that stretch reads ADLLYHDLLYLRIFIGTLLIF. Over 491 to 539 the chain is Lumenal; it reads TQTWINASIIDLIGYFGWFYGDFFIPKSQSFANHLTKAGVYRYLNNPEQ. Residues 540–560 traverse the membrane as a helical segment; the sequence is IFGVCGVMGVFIIWPTFENLT. The Cytoplasmic segment spans residues 561 to 883; the sequence is CCVLWVLSNF…SYDLSIKKDE (323 aa).

Belongs to the class VI-like SAM-binding methyltransferase superfamily. CHO2 family.

It localises to the endoplasmic reticulum membrane. It catalyses the reaction a 1,2-diacyl-sn-glycero-3-phosphoethanolamine + S-adenosyl-L-methionine = a 1,2-diacyl-sn-glycero-3-phospho-N-methylethanolamine + S-adenosyl-L-homocysteine + H(+). Its pathway is phospholipid metabolism; phosphatidylcholine biosynthesis. Functionally, catalyzes the first step of the methylation pathway of phosphatidylcholine biosynthesis, the SAM-dependent methylation of phosphatidylethanolamine (PE) to phosphatidylmonomethylethanolamine (PMME). The chain is Phosphatidylethanolamine N-methyltransferase (CHO2) from Lodderomyces elongisporus (strain ATCC 11503 / CBS 2605 / JCM 1781 / NBRC 1676 / NRRL YB-4239) (Yeast).